The chain runs to 381 residues: Creatine kinase M-type (381 aa).

Positions 11-98 constitute a Phosphagen kinase N-terminal domain; sequence KLNFKAEEEY…FDPIIQDRHG (88 aa). In terms of domain architecture, Phosphagen kinase C-terminal spans 125–367; sequence YVLSSRVRTG…KLMVEMEKKL (243 aa). 128-132 provides a ligand contact to ATP; sequence SSRVR. Ser164 carries the post-translational modification Phosphoserine. Thr166 carries the phosphothreonine modification. The residue at position 178 (Ser178) is a Phosphoserine. Thr180 carries the post-translational modification Phosphothreonine. His191 is an ATP binding site. At Ser199 the chain carries Phosphoserine. ATP is bound by residues Arg236 and Arg292. Thr313 and Thr322 each carry phosphothreonine. ATP-binding positions include 320-325 and Asp335; that span reads RGTGGV. Ser372 carries the phosphoserine modification.

This sequence belongs to the ATP:guanido phosphotransferase family. Dimer of identical or non-identical chains, which can be either B (brain type) or M (muscle type). With MM being the major form in skeletal muscle and myocardium, MB existing in myocardium, and BB existing in many tissues, especially brain.

It is found in the cytoplasm. It catalyses the reaction creatine + ATP = N-phosphocreatine + ADP + H(+). Reversibly catalyzes the transfer of phosphate between ATP and various phosphogens (e.g. creatine phosphate). Creatine kinase isoenzymes play a central role in energy transduction in tissues with large, fluctuating energy demands, such as skeletal muscle, heart, brain and spermatozoa. This chain is Creatine kinase M-type (CKM), found in Bos taurus (Bovine).